The chain runs to 174 residues: DNA-directed RNA polymerase IV subunit 7 (174 aa).

Belongs to the eukaryotic RPB7/RPC8 RNA polymerase subunit family. Component of the RNA polymerase IV complex. Interacts with NRPD1.

The protein resides in the nucleus. DNA-dependent RNA polymerase catalyzes the transcription of DNA into RNA using the four ribonucleoside triphosphates as substrates. Component of RNA polymerase IV which mediates 24-nt short-interfering RNAs (siRNA) accumulation. Implicated in siRNA-directed heterochromatin formation through the action of DCL3 and AGO4, and subsequent DNA methylation-dependent silencing of targeted sequences. Essential component of a self-reinforcing loop coupling de novo DNA methylation to siRNA production. Required for intercellular but not intracellular RNA interference (RNAi) leading to systemic post-transcriptional gene silencing. Involved in the maintenance of post-transcriptional RNA silencing. The sequence is that of DNA-directed RNA polymerase IV subunit 7 (NRPD7) from Arabidopsis thaliana (Mouse-ear cress).